The sequence spans 129 residues: Small ribosomal subunit protein uS11 (129 aa).

The protein belongs to the universal ribosomal protein uS11 family. Part of the 30S ribosomal subunit. Interacts with proteins S7 and S18. Binds to IF-3.

Functionally, located on the platform of the 30S subunit, it bridges several disparate RNA helices of the 16S rRNA. Forms part of the Shine-Dalgarno cleft in the 70S ribosome. The chain is Small ribosomal subunit protein uS11 from Aliivibrio fischeri (strain ATCC 700601 / ES114) (Vibrio fischeri).